The primary structure comprises 1165 residues: Transient receptor potential cation channel subfamily M member 5 (1165 aa).

Over 1-715 (MVEKSSERFD…LRRWNRFWSA (715 aa)) the chain is Cytoplasmic. At S121 the chain carries Phosphoserine. Ca(2+)-binding residues include E212, C324, D333, D336, and E337. The helical transmembrane segment at 716 to 740 (PVTVFMGNVIMYFAFLILFSYVLLL) threads the bilayer. Topologically, residues 741–751 (DFRPPPPYGPS) are extracellular. A helical transmembrane segment spans residues 752–771 (AAEIILYFWVFTLVLEEIRQ). 2 residues coordinate Ca(2+): E768 and Q771. Residues 772-792 (SFFTDEDMSILKKMKLYVEDN) lie on the Cytoplasmic side of the membrane. A helical transmembrane segment spans residues 793-811 (WNKCDMVAISLFVVGLSCR). Positions 794 and 797 each coordinate Ca(2+). The Extracellular portion of the chain corresponds to 812 to 818 (MAMSTYE). Residues 819–841 (AGRTVLALDFMVFTLRLIHIFAI) traverse the membrane as a helical segment. Residues 842-850 (HKQLGPKII) lie on the Cytoplasmic side of the membrane. A helical membrane pass occupies residues 851-880 (IVERMIKDVFFFLFFLSVWLIAYGVTTQAL). Over 881 to 889 (LHPNDPRID) the chain is Extracellular. The pore-forming intramembrane region spans 890-930 (WVFRRALYRPYLHIFGQIPLEEIDAAKMPDDNCTTDVQEII). The Selectivity filter signature appears at 904–906 (FGQ). The Extracellular portion of the chain corresponds to 931–942 (LGTLPPCPNIYA). A helical transmembrane segment spans residues 943 to 977 (NWLVILLLVIYLLVTNVLLLNLLIAMFSYTFQVVQ). Topologically, residues 978–1165 (ENADIFWKFQ…TDKKLPFIDH (188 aa)) are cytoplasmic. E994 provides a ligand contact to Ca(2+). The interval 1122–1165 (RDAPKAPRSIAGSSRDQQPQGAKRQQPAGHPAYGTDKKLPFIDH) is disordered. The span at 1132–1141 (AGSSRDQQPQ) shows a compositional bias: polar residues. A compositionally biased stretch (basic and acidic residues) spans 1156-1165 (TDKKLPFIDH).

The protein belongs to the transient receptor (TC 1.A.4) family. LTrpC subfamily. TRPM5 sub-subfamily. As to quaternary structure, homotetramer.

Its subcellular location is the cell membrane. The catalysed reaction is Na(+)(in) = Na(+)(out). It carries out the reaction K(+)(in) = K(+)(out). Ca(2+)-activated cation channel. Displays voltage dependence modulation. Regulated by PI(4,5)P2 levels. PI(4,5)P 2 reverses the Ca(2+) -induced desensitization of channels. Is highly temperature-sensitive. In terms of biological role, monovalent cation-selective ion channel activated by intracellular Ca(2+) in a voltage- and temperature-dependent manner. Mediates the transport of Na(+), K(+) and Cs(+) ions equally well. Activated directly by increase in intracellular Ca(2+), but is impermeable to it. The activation mechanism of TRPM5 involves a multistep process. TRPM5 activation involves ligand binding (i.e., tastant molecule, glucose stimulation) to Gq/G-protein coupled receptors (GPCR) and leads to the breakdown of phosphatidylinositol bisphosphate (PIP2) into diacylglycerol (DAG) and inositol trisphosphate (IP3), IP3 binds to its receptors in the endoplasmic reticulum and cause Ca(2+) release. Simultaneously with the intracellular Ca(2+) release, DAG activates the protein kinase C (PKC), which phosphorylates the TRPM5 channel. This phosphorylation combined with the bound Ca(2+), leads to a robust inward current allowing the entry of sodium ions (Na+) into the cell. This ion influx depolarizes the cell membrane, generating action potentials that propagate TRPM5 signals. The polypeptide is Transient receptor potential cation channel subfamily M member 5 (Danio rerio (Zebrafish)).